A 402-amino-acid polypeptide reads, in one-letter code: Tyrosine--tRNA ligase (402 aa).

The 'HIGH' region motif lies at 48–57 (PTGSDIHLGH). The short motif at 235–239 (KMSKS) is the 'KMSKS' region element. Lys-238 contacts ATP. One can recognise an S4 RNA-binding domain in the interval 338-402 (AKAFYLVSAV…GKKKFVRLVL (65 aa)).

Belongs to the class-I aminoacyl-tRNA synthetase family. TyrS type 2 subfamily. As to quaternary structure, homodimer.

The protein localises to the cytoplasm. It carries out the reaction tRNA(Tyr) + L-tyrosine + ATP = L-tyrosyl-tRNA(Tyr) + AMP + diphosphate + H(+). Catalyzes the attachment of tyrosine to tRNA(Tyr) in a two-step reaction: tyrosine is first activated by ATP to form Tyr-AMP and then transferred to the acceptor end of tRNA(Tyr). This chain is Tyrosine--tRNA ligase, found in Synechococcus elongatus (strain ATCC 33912 / PCC 7942 / FACHB-805) (Anacystis nidulans R2).